Here is a 76-residue protein sequence, read N- to C-terminus: MGAAISQGALIAIVCNGLVGFLLLLLWVILCWACHSRSADVDSLSESSPNSSPGPCPEKAPPPQKPSHEGSYLLQP.

A signal peptide spans 1-33 (MGAAISQGALIAIVCNGLVGFLLLLLWVILCWA). The disordered stretch occupies residues 41–76 (VDSLSESSPNSSPGPCPEKAPPPQKPSHEGSYLLQP). The segment covering 52 to 65 (SPGPCPEKAPPPQK) has biased composition (pro residues).

As to expression, expressed in liver and brain.

The protein localises to the secreted. In terms of biological role, involved in the regulation of glucose homeostasis and lipid metabolism. The chain is Adropin (ENHO) from Homo sapiens (Human).